The primary structure comprises 34 residues: MSDIN-like toxin proprotein 4 (34 aa).

The propeptide occupies 1-10 (MSDINTARLP). Residues 11 to 20 (LFLPPVRMPP) constitute a cross-link (cyclopeptide (Leu-Pro)). Positions 21–34 (CVGDDIEMVLTRGE) are excised as a propeptide.

It belongs to the MSDIN fungal toxin family. Post-translationally, processed by the macrocyclase-peptidase enzyme POPB to yield a toxic cyclic decapeptide. POPB first removes 10 residues from the N-terminus. Conformational trapping of the remaining peptide forces the enzyme to release this intermediate rather than proceed to macrocyclization. The enzyme rebinds the remaining peptide in a different conformation and catalyzes macrocyclization of the N-terminal 10 residues.

In terms of biological role, probable toxin that belongs to the MSDIN-like toxin family responsible for a large number of food poisoning cases and deaths. This Amanita bisporigera (Destroying angel) protein is MSDIN-like toxin proprotein 4.